The sequence spans 268 residues: MKFAVIGNPISHSLSPVMHRANFNSLGLDDTYEALNIPIEDFHLIKEIISKKELEGFNITIPHKERIIPYLDYVDEQAINAGAVNTVLIKDGKWIGYNTDGIGYVKGLHSVYPDLENAYILILGAGGASKGIAYELAKFVKPKLTVANRTMARFESWNLNINQISLADAEKYLAEFDIVINTTPAGMAGNNESIINLKHLSPNTLMSDIVYIPYKTPILEEAERKGNHIYNGLDMFVYQGAESFKIWTNKDADINSMKTAVLQQLKGE.

Residues 13 to 15 and Thr60 contribute to the shikimate site; that span reads SLS. The active-site Proton acceptor is Lys64. Glu76 is a binding site for NADP(+). 2 residues coordinate shikimate: Asn85 and Asp100. NADP(+)-binding positions include 124–128, 148–153, and Ile209; these read GAGGA and NRTMAR. Shikimate is bound at residue Tyr211. Gly232 contacts NADP(+).

Belongs to the shikimate dehydrogenase family. Homodimer.

The catalysed reaction is shikimate + NADP(+) = 3-dehydroshikimate + NADPH + H(+). It functions in the pathway metabolic intermediate biosynthesis; chorismate biosynthesis; chorismate from D-erythrose 4-phosphate and phosphoenolpyruvate: step 4/7. Functionally, involved in the biosynthesis of the chorismate, which leads to the biosynthesis of aromatic amino acids. Catalyzes the reversible NADPH linked reduction of 3-dehydroshikimate (DHSA) to yield shikimate (SA). The protein is Shikimate dehydrogenase (NADP(+)) of Staphylococcus aureus (strain USA300).